The sequence spans 299 residues: 33 kDa chaperonin (299 aa).

Cystine bridges form between C234-C236 and C268-C271.

The protein belongs to the HSP33 family. In terms of processing, under oxidizing conditions two disulfide bonds are formed involving the reactive cysteines. Under reducing conditions zinc is bound to the reactive cysteines and the protein is inactive.

It is found in the cytoplasm. Functionally, redox regulated molecular chaperone. Protects both thermally unfolding and oxidatively damaged proteins from irreversible aggregation. Plays an important role in the bacterial defense system toward oxidative stress. This chain is 33 kDa chaperonin, found in Pseudomonas putida (strain ATCC 700007 / DSM 6899 / JCM 31910 / BCRC 17059 / LMG 24140 / F1).